The chain runs to 157 residues: Phosphopantetheine adenylyltransferase (157 aa).

S9 serves as a coordination point for substrate. Residues 9-10 (SF) and H17 each bind ATP. Residues K41, L73, and K87 each contribute to the substrate site. Residues 88 to 90 (GLR), E98, and 123 to 129 (YSYLSSS) each bind ATP.

It belongs to the bacterial CoaD family. In terms of assembly, homohexamer. It depends on Mg(2+) as a cofactor.

It is found in the cytoplasm. It carries out the reaction (R)-4'-phosphopantetheine + ATP + H(+) = 3'-dephospho-CoA + diphosphate. The protein operates within cofactor biosynthesis; coenzyme A biosynthesis; CoA from (R)-pantothenate: step 4/5. Its function is as follows. Reversibly transfers an adenylyl group from ATP to 4'-phosphopantetheine, yielding dephospho-CoA (dPCoA) and pyrophosphate. The chain is Phosphopantetheine adenylyltransferase from Alkaliphilus metalliredigens (strain QYMF).